A 500-amino-acid chain; its full sequence is NAD(P)H-quinone oxidoreductase chain 4, chloroplastic (500 aa).

A run of 14 helical transmembrane segments spans residues 4–24, 37–57, 87–107, 111–131, 134–154, 167–187, 208–228, 242–262, 272–292, 305–325, 330–350, 386–406, 416–436, and 462–482; these read FPWL…IFLL, LCIC…HFQL, IGPI…AWPV, AQLF…SFSS, LLLF…LLSM, FILY…GIGL, ALEV…LPII, HYST…YGLV, AHCL…IYAA, IAYS…SLSD, GAIL…FLAG, LALP…GIIT, ILIA…SLSM, and LFVS…PDFV.

The protein belongs to the complex I subunit 4 family.

It localises to the plastid. It is found in the chloroplast thylakoid membrane. It carries out the reaction a plastoquinone + NADH + (n+1) H(+)(in) = a plastoquinol + NAD(+) + n H(+)(out). The enzyme catalyses a plastoquinone + NADPH + (n+1) H(+)(in) = a plastoquinol + NADP(+) + n H(+)(out). The polypeptide is NAD(P)H-quinone oxidoreductase chain 4, chloroplastic (Oenothera biennis (German evening primrose)).